A 257-amino-acid polypeptide reads, in one-letter code: NAD kinase (257 aa).

Residue Asp46 is the Proton acceptor of the active site. NAD(+)-binding positions include 46–47 (DG), 116–117 (NE), Asp146, Ala154, and 157–162 (TAYNLS).

It belongs to the NAD kinase family. It depends on a divalent metal cation as a cofactor.

It localises to the cytoplasm. It carries out the reaction NAD(+) + ATP = ADP + NADP(+) + H(+). In terms of biological role, involved in the regulation of the intracellular balance of NAD and NADP, and is a key enzyme in the biosynthesis of NADP. Catalyzes specifically the phosphorylation on 2'-hydroxyl of the adenosine moiety of NAD to yield NADP. This Mesorhizobium japonicum (strain LMG 29417 / CECT 9101 / MAFF 303099) (Mesorhizobium loti (strain MAFF 303099)) protein is NAD kinase.